A 200-amino-acid polypeptide reads, in one-letter code: Recombination protein RecR (200 aa).

A C4-type zinc finger spans residues 57–72; the sequence is CSHCRTFTENERCEIC. The Toprim domain occupies 81-176; that stretch reads GLLCVVESPA…KVSRIAHGVP (96 aa).

The protein belongs to the RecR family.

Its function is as follows. May play a role in DNA repair. It seems to be involved in an RecBC-independent recombinational process of DNA repair. It may act with RecF and RecO. The sequence is that of Recombination protein RecR from Aeromonas hydrophila subsp. hydrophila (strain ATCC 7966 / DSM 30187 / BCRC 13018 / CCUG 14551 / JCM 1027 / KCTC 2358 / NCIMB 9240 / NCTC 8049).